The following is a 96-amino-acid chain: Sec-independent protein translocase protein TatA (96 aa).

The chain crosses the membrane as a helical span at residues 1–21 (MGFSSIWHWIIVLVVVLLLFG). Residues 42–96 (GMADDEDDEAASVSAERRGIEDGKPAQTIYPPQQPQQPQQPPQQPPVHRDDAPRG) form a disordered region. Residues 56–65 (AERRGIEDGK) are compositionally biased toward basic and acidic residues. The span at 73–86 (PQQPQQPQQPPQQP) shows a compositional bias: pro residues.

Belongs to the TatA/E family. As to quaternary structure, the Tat system comprises two distinct complexes: a TatABC complex, containing multiple copies of TatA, TatB and TatC subunits, and a separate TatA complex, containing only TatA subunits. Substrates initially bind to the TatABC complex, which probably triggers association of the separate TatA complex to form the active translocon.

The protein localises to the cell inner membrane. Functionally, part of the twin-arginine translocation (Tat) system that transports large folded proteins containing a characteristic twin-arginine motif in their signal peptide across membranes. TatA could form the protein-conducting channel of the Tat system. The polypeptide is Sec-independent protein translocase protein TatA (Rhodospirillum rubrum (strain ATCC 11170 / ATH 1.1.1 / DSM 467 / LMG 4362 / NCIMB 8255 / S1)).